Consider the following 236-residue polypeptide: 2,3,4,5-tetrahydropyridine-2,6-dicarboxylate N-acetyltransferase (236 aa).

This sequence belongs to the transferase hexapeptide repeat family. DapH subfamily.

It carries out the reaction (S)-2,3,4,5-tetrahydrodipicolinate + acetyl-CoA + H2O = L-2-acetamido-6-oxoheptanedioate + CoA. The protein operates within amino-acid biosynthesis; L-lysine biosynthesis via DAP pathway; LL-2,6-diaminopimelate from (S)-tetrahydrodipicolinate (acetylase route): step 1/3. Functionally, catalyzes the transfer of an acetyl group from acetyl-CoA to tetrahydrodipicolinate. The chain is 2,3,4,5-tetrahydropyridine-2,6-dicarboxylate N-acetyltransferase from Clostridium botulinum (strain Eklund 17B / Type B).